Here is a 185-residue protein sequence, read N- to C-terminus: Gastrokine-1 (185 aa).

Positions 1 to 20 are cleaved as a signal peptide; the sequence is MKFTIAFAGLLGVFLTPALA. The 97-residue stretch at 54–150 folds into the BRICHOS domain; that stretch reads NNGWNSWNAL…MCKGIPTYMA (97 aa). C81 and C142 form a disulfide bridge.

Belongs to the gastrokine family. As to expression, highly expressed specifically in surface cells of the antrum mucosa from where it is secreted.

It localises to the secreted. Its subcellular location is the cytoplasmic granule. It is found in the golgi apparatus. In terms of biological role, has mitogenic activity and may be involved in maintaining the integrity of the gastric mucosal epithelium. In Sus scrofa (Pig), this protein is Gastrokine-1 (GKN1).